Consider the following 133-residue polypeptide: Holo-[acyl-carrier-protein] synthase (133 aa).

Mg(2+)-binding residues include aspartate 8 and glutamate 56.

It belongs to the P-Pant transferase superfamily. AcpS family. Mg(2+) serves as cofactor.

It is found in the cytoplasm. The catalysed reaction is apo-[ACP] + CoA = holo-[ACP] + adenosine 3',5'-bisphosphate + H(+). Transfers the 4'-phosphopantetheine moiety from coenzyme A to a Ser of acyl-carrier-protein. The chain is Holo-[acyl-carrier-protein] synthase from Deinococcus radiodurans (strain ATCC 13939 / DSM 20539 / JCM 16871 / CCUG 27074 / LMG 4051 / NBRC 15346 / NCIMB 9279 / VKM B-1422 / R1).